A 436-amino-acid chain; its full sequence is Xylose isomerase (436 aa).

Catalysis depends on residues H100 and D103. Residues E231, E267, H270, D295, D306, D308, and D338 each coordinate Mg(2+).

It belongs to the xylose isomerase family. As to quaternary structure, homotetramer. Requires Mg(2+) as cofactor.

Its subcellular location is the cytoplasm. It carries out the reaction alpha-D-xylose = alpha-D-xylulofuranose. This chain is Xylose isomerase, found in Ruegeria sp. (strain TM1040) (Silicibacter sp.).